We begin with the raw amino-acid sequence, 134 residues long: UPF0412 protein YaaI (134 aa).

The N-terminal stretch at 1–23 (MRSVLTISASLLFGLALSSVAHA) is a signal peptide.

This sequence belongs to the UPF0412 family.

The chain is UPF0412 protein YaaI from Salmonella choleraesuis (strain SC-B67).